Reading from the N-terminus, the 456-residue chain is Bifunctional protein GlmU (456 aa).

The interval 1-229 (MLNNAMSVVI…LSEVEGVNNR (229 aa)) is pyrophosphorylase. UDP-N-acetyl-alpha-D-glucosamine-binding positions include 11 to 14 (LAAG), lysine 25, glutamine 76, 81 to 82 (GT), 103 to 105 (YGD), glycine 140, glutamate 154, asparagine 169, and asparagine 227. Residue aspartate 105 participates in Mg(2+) binding. Asparagine 227 serves as a coordination point for Mg(2+). Residues 230–250 (LQLSRLERVYQSEQAEKLLLA) are linker. The N-acetyltransferase stretch occupies residues 251-456 (GVMLRDPARF…EGWRRPVKKK (206 aa)). 2 residues coordinate UDP-N-acetyl-alpha-D-glucosamine: arginine 333 and lysine 351. Histidine 363 serves as the catalytic Proton acceptor. Residues tyrosine 366 and asparagine 377 each coordinate UDP-N-acetyl-alpha-D-glucosamine. Acetyl-CoA contacts are provided by residues alanine 380, 386–387 (NY), serine 405, alanine 423, and arginine 440.

It in the N-terminal section; belongs to the N-acetylglucosamine-1-phosphate uridyltransferase family. The protein in the C-terminal section; belongs to the transferase hexapeptide repeat family. As to quaternary structure, homotrimer. The cofactor is Mg(2+).

The protein resides in the cytoplasm. The catalysed reaction is alpha-D-glucosamine 1-phosphate + acetyl-CoA = N-acetyl-alpha-D-glucosamine 1-phosphate + CoA + H(+). It catalyses the reaction N-acetyl-alpha-D-glucosamine 1-phosphate + UTP + H(+) = UDP-N-acetyl-alpha-D-glucosamine + diphosphate. Its pathway is nucleotide-sugar biosynthesis; UDP-N-acetyl-alpha-D-glucosamine biosynthesis; N-acetyl-alpha-D-glucosamine 1-phosphate from alpha-D-glucosamine 6-phosphate (route II): step 2/2. It functions in the pathway nucleotide-sugar biosynthesis; UDP-N-acetyl-alpha-D-glucosamine biosynthesis; UDP-N-acetyl-alpha-D-glucosamine from N-acetyl-alpha-D-glucosamine 1-phosphate: step 1/1. The protein operates within bacterial outer membrane biogenesis; LPS lipid A biosynthesis. In terms of biological role, catalyzes the last two sequential reactions in the de novo biosynthetic pathway for UDP-N-acetylglucosamine (UDP-GlcNAc). The C-terminal domain catalyzes the transfer of acetyl group from acetyl coenzyme A to glucosamine-1-phosphate (GlcN-1-P) to produce N-acetylglucosamine-1-phosphate (GlcNAc-1-P), which is converted into UDP-GlcNAc by the transfer of uridine 5-monophosphate (from uridine 5-triphosphate), a reaction catalyzed by the N-terminal domain. The polypeptide is Bifunctional protein GlmU (Escherichia fergusonii (strain ATCC 35469 / DSM 13698 / CCUG 18766 / IAM 14443 / JCM 21226 / LMG 7866 / NBRC 102419 / NCTC 12128 / CDC 0568-73)).